The primary structure comprises 1088 residues: RNA-directed RNA polymerase (1088 aa).

The 187-residue stretch at 501–687 folds into the RdRp catalytic domain; sequence LSYGDVTRFL…AKRYIAGGKI (187 aa).

The protein belongs to the reoviridae RNA-directed RNA polymerase family. As to quaternary structure, interacts with VP3 (Potential). Interacts with VP2; this interaction activates VP1. Interacts with NSP5; this interaction is probably necessary for the formation of functional virus factories. Interacts with NSP2; this interaction is weak. Requires Mg(2+) as cofactor.

The protein resides in the virion. The catalysed reaction is RNA(n) + a ribonucleoside 5'-triphosphate = RNA(n+1) + diphosphate. RNA-directed RNA polymerase that is involved in both transcription and genome replication. Together with VP3 capping enzyme, forms an enzyme complex positioned near the channels situated at each of the five-fold vertices of the core. Following infection, the outermost layer of the virus is lost, leaving a double-layered particle (DLP) made up of the core and VP6 shell. VP1 then catalyzes the transcription of fully conservative plus-strand genomic RNAs that are extruded through the DLP's channels into the cytoplasm where they function as mRNAs for translation of viral proteins. One copy of each of the viral (+)RNAs is also recruited during core assembly, together with newly synthesized polymerase complexes and VP2. The polymerase of these novo-formed particles catalyzes the synthesis of complementary minus-strands leading to dsRNA formation. To do so, the polymerase specifically recognizes and binds 4 bases 5'-UGUG-3' in the conserved 3'-sequence of plus-strand RNA templates. VP2 presumably activates the autoinhibited VP1-RNA complex to coordinate packaging and genome replication. Once dsRNA synthesis is complete, the polymerase switches to the transcriptional mode, thus providing secondary transcription. The chain is RNA-directed RNA polymerase from Homo sapiens (Human).